The sequence spans 232 residues: Ribonuclease 3 (232 aa).

In terms of domain architecture, RNase III spans 6–133 (FNDIENRLGV…VIAAVYLDKG (128 aa)). Mg(2+) is bound at residue glutamate 46. Aspartate 50 is a catalytic residue. Residues aspartate 119 and glutamate 122 each coordinate Mg(2+). Glutamate 122 is a catalytic residue. One can recognise a DRBM domain in the interval 160 to 229 (DFKTKLQELL…AKEALKRLEK (70 aa)).

It belongs to the ribonuclease III family. In terms of assembly, homodimer. Requires Mg(2+) as cofactor.

The protein resides in the cytoplasm. The enzyme catalyses Endonucleolytic cleavage to 5'-phosphomonoester.. In terms of biological role, digests double-stranded RNA. Involved in the processing of primary rRNA transcript to yield the immediate precursors to the large and small rRNAs (23S and 16S). Processes some mRNAs, and tRNAs when they are encoded in the rRNA operon. Processes pre-crRNA and tracrRNA of type II CRISPR loci if present in the organism. The sequence is that of Ribonuclease 3 from Clostridium botulinum (strain Eklund 17B / Type B).